The sequence spans 205 residues: High frequency lysogenization protein HflD homolog (205 aa).

It belongs to the HflD family.

The protein localises to the cytoplasm. It localises to the cell inner membrane. The protein is High frequency lysogenization protein HflD homolog of Vibrio vulnificus (strain CMCP6).